Reading from the N-terminus, the 112-residue chain is MKLVTVIIKPFKLEDVREALSSIGIQGLTVTEVKGFGRQKGHAELYRGAEYSVNFLPKVKIDVAIADDQLDEVIDIVSKAAYTGKIGDGKIFVAELQRVIRIRTGEADEAAL.

Thr-29 provides a ligand contact to ADP. Gly-37 is an ATP binding site. 38–39 (RQ) contacts ADP. Tyr-51 carries the post-translational modification O-UMP-tyrosine. ADP is bound by residues Ala-64, 87 to 90 (GDGK), and 101 to 103 (RIR). Residues Ala-64, 87–90 (GDGK), and 101–103 (RIR) each bind ATP.

It belongs to the P(II) protein family. In terms of assembly, homotrimer. In response to elevation of the extracellular ammonium concentration, interacts and forms a complex with AmtB. In terms of processing, uridylylated/deuridylylated by GlnD. Fully uridylylated in nitrogen-limited conditions and deuridylylated when extracellular ammonium increases.

It is found in the cytoplasm. Its subcellular location is the cell inner membrane. Formation of the GlnK-AmtB complex is influenced by intracellular pools of the effector molecules ATP, ADP, Mg(2+) and 2-oxoglutarate. The GlnK-AmtB interaction is also controlled by the level of intracellular glutamine and the uridylylation status of GlnK. Its function is as follows. Involved in the regulation of nitrogen metabolism. Regulates the activity of its targets by protein-protein interaction in response to the nitrogen status of the cell. Involved in the regulation of the ammonium transporter AmtB so as to optimize ammonium uptake under all growth conditions. In nitrogen-limited conditions, GlnK does not interact with AmtB, which remains active and imports ammonium. When extracellular ammonium increases, GlnK associates tightly with AmtB in the inner membrane, thereby inhibiting the transporter activity. This Escherichia coli O157:H7 protein is Nitrogen regulatory protein GlnK (glnK).